Here is a 150-residue protein sequence, read N- to C-terminus: SLASAAYDQGRLAAQAIIKGDASAHLIEDIPTGIYTIPEISSVGKTEQELTAMKVPYEVGRAQFKHLARAQIVGMNVGSLKILFHRETKQILGIHCFGERAAEIIHIGQAIMEQKGEGNTIEYFVNTTFNYPTMAEAYRVAALNGLNRLF.

It belongs to the class-I pyridine nucleotide-disulfide oxidoreductase family. The cofactor is FAD.

It localises to the cytoplasm. It catalyses the reaction NAD(+) + NADPH = NADH + NADP(+). Functionally, conversion of NADPH, generated by peripheral catabolic pathways, to NADH, which can enter the respiratory chain for energy generation. The polypeptide is Soluble pyridine nucleotide transhydrogenase (sthA) (Pectobacterium carotovorum subsp. carotovorum (Erwinia carotovora subsp. carotovora)).